We begin with the raw amino-acid sequence, 223 residues long: 3,4-dihydroxy-2-butanone 4-phosphate synthase (223 aa).

D-ribulose 5-phosphate contacts are provided by residues Arg-39–Glu-40, Asp-44, Arg-152–Thr-156, and Glu-176. Glu-40 contributes to the Mg(2+) binding site. His-155 serves as a coordination point for Mg(2+).

This sequence belongs to the DHBP synthase family. As to quaternary structure, homodimer. It depends on Mg(2+) as a cofactor. Mn(2+) serves as cofactor.

The enzyme catalyses D-ribulose 5-phosphate = (2S)-2-hydroxy-3-oxobutyl phosphate + formate + H(+). It participates in cofactor biosynthesis; riboflavin biosynthesis; 2-hydroxy-3-oxobutyl phosphate from D-ribulose 5-phosphate: step 1/1. Its function is as follows. Catalyzes the conversion of D-ribulose 5-phosphate to formate and 3,4-dihydroxy-2-butanone 4-phosphate. The chain is 3,4-dihydroxy-2-butanone 4-phosphate synthase from Desulfovibrio desulfuricans (strain ATCC 27774 / DSM 6949 / MB).